Reading from the N-terminus, the 205-residue chain is dITP/XTP pyrophosphatase (205 aa).

Residue 8 to 13 coordinates substrate; that stretch reads SGNKGK. Aspartate 69 acts as the Proton acceptor in catalysis. Aspartate 69 is a binding site for Mg(2+). Substrate contacts are provided by residues serine 70, 153-156, lysine 176, and 181-182; these read HGYD and HR.

This sequence belongs to the HAM1 NTPase family. As to quaternary structure, homodimer. Requires Mg(2+) as cofactor.

It carries out the reaction XTP + H2O = XMP + diphosphate + H(+). The catalysed reaction is dITP + H2O = dIMP + diphosphate + H(+). It catalyses the reaction ITP + H2O = IMP + diphosphate + H(+). In terms of biological role, pyrophosphatase that catalyzes the hydrolysis of nucleoside triphosphates to their monophosphate derivatives, with a high preference for the non-canonical purine nucleotides XTP (xanthosine triphosphate), dITP (deoxyinosine triphosphate) and ITP. Seems to function as a house-cleaning enzyme that removes non-canonical purine nucleotides from the nucleotide pool, thus preventing their incorporation into DNA/RNA and avoiding chromosomal lesions. The protein is dITP/XTP pyrophosphatase of Shewanella oneidensis (strain ATCC 700550 / JCM 31522 / CIP 106686 / LMG 19005 / NCIMB 14063 / MR-1).